The sequence spans 132 residues: L-ectoine synthase (132 aa).

This sequence belongs to the ectoine synthase family.

It catalyses the reaction (2S)-4-acetamido-2-aminobutanoate = L-ectoine + H2O. It functions in the pathway amine and polyamine biosynthesis; ectoine biosynthesis; L-ectoine from L-aspartate 4-semialdehyde: step 3/3. Catalyzes the circularization of gamma-N-acetyl-alpha,gamma-diaminobutyric acid (ADABA) to ectoine (1,4,5,6-tetrahydro-2-methyl-4-pyrimidine carboxylic acid), which is an excellent osmoprotectant. The sequence is that of L-ectoine synthase (ectC) from Streptomyces anulatus (Streptomyces chrysomallus).